A 71-amino-acid chain; its full sequence is Disintegrin viridin (71 aa).

The region spanning 1–71 is the Disintegrin domain; that stretch reads AGEECDCGSP…SADCPRNRFH (71 aa). 6 cysteine pairs are disulfide-bonded: cysteine 5–cysteine 20, cysteine 7–cysteine 15, cysteine 14–cysteine 37, cysteine 28–cysteine 34, cysteine 33–cysteine 58, and cysteine 46–cysteine 65. The short motif at 50 to 52 is the Cell attachment site element; sequence RGD. The tract at residues 50–71 is disordered; that stretch reads RGDNPDDRCTGQSADCPRNRFH.

Belongs to the venom metalloproteinase (M12B) family. P-II subfamily. P-IIa sub-subfamily. As to quaternary structure, monomer (disintegrin). As to expression, expressed by the venom gland.

The protein localises to the secreted. Its function is as follows. Inhibits fibrinogen interaction with platelets. Acts by binding to alpha-IIb/beta-3 (ITGA2B/ITGB3) on the platelet surface and inhibits aggregation induced by ADP, thrombin, platelet-activating factor and collagen. The sequence is that of Disintegrin viridin from Crotalus viridis viridis (Prairie rattlesnake).